The chain runs to 233 residues: Small ribosomal subunit protein uS2 (233 aa).

It belongs to the universal ribosomal protein uS2 family.

The polypeptide is Small ribosomal subunit protein uS2 (Clostridium acetobutylicum (strain ATCC 824 / DSM 792 / JCM 1419 / IAM 19013 / LMG 5710 / NBRC 13948 / NRRL B-527 / VKM B-1787 / 2291 / W)).